The chain runs to 798 residues: Nuclear intron maturase 4, mitochondrial (798 aa).

A mitochondrion-targeting transit peptide spans 1–16 (MFRKRNLVLDLLRRCY). The intron maturase type-2 stretch occupies residues 578–665 (VVAPTNAIGR…AAKYRIHENE (88 aa)). The THAP-type zinc-finger motif lies at 729-778 (CFVIGCSMAAPAVYTLHAMERQKFPGWKTGFSVCIPSSLNGRRIGLCKQH).

The protein belongs to the plant nuclear intron maturase (nMat) family.

It localises to the mitochondrion. The protein resides in the plastid. Its subcellular location is the chloroplast. Its function is as follows. Nuclear-encoded maturase required for splicing of group-II introns in mitochondria. Involved in NAD1 pre-mRNA processing and maturation of introns 1, 3 and 4. Necessary for mitochondrial biogenesis during early developmental stages. Essential for respiratory holocomplex I biogenesis in mitochondria. The protein is Nuclear intron maturase 4, mitochondrial of Arabidopsis thaliana (Mouse-ear cress).